The following is a 557-amino-acid chain: Dihydroxy-acid dehydratase (557 aa).

C47 is a [2Fe-2S] cluster binding site. D79 is a binding site for Mg(2+). C120 is a [2Fe-2S] cluster binding site. 2 residues coordinate Mg(2+): D121 and K122. K122 carries the post-translational modification N6-carboxylysine. C192 contacts [2Fe-2S] cluster. E444 is a binding site for Mg(2+). S470 acts as the Proton acceptor in catalysis.

Belongs to the IlvD/Edd family. As to quaternary structure, homodimer. [2Fe-2S] cluster is required as a cofactor. It depends on Mg(2+) as a cofactor.

It carries out the reaction (2R)-2,3-dihydroxy-3-methylbutanoate = 3-methyl-2-oxobutanoate + H2O. The enzyme catalyses (2R,3R)-2,3-dihydroxy-3-methylpentanoate = (S)-3-methyl-2-oxopentanoate + H2O. Its pathway is amino-acid biosynthesis; L-isoleucine biosynthesis; L-isoleucine from 2-oxobutanoate: step 3/4. It functions in the pathway amino-acid biosynthesis; L-valine biosynthesis; L-valine from pyruvate: step 3/4. In terms of biological role, functions in the biosynthesis of branched-chain amino acids. Catalyzes the dehydration of (2R,3R)-2,3-dihydroxy-3-methylpentanoate (2,3-dihydroxy-3-methylvalerate) into 2-oxo-3-methylpentanoate (2-oxo-3-methylvalerate) and of (2R)-2,3-dihydroxy-3-methylbutanoate (2,3-dihydroxyisovalerate) into 2-oxo-3-methylbutanoate (2-oxoisovalerate), the penultimate precursor to L-isoleucine and L-valine, respectively. The polypeptide is Dihydroxy-acid dehydratase (Synechococcus sp. (strain CC9605)).